The chain runs to 1011 residues: Retinoblastoma-related protein (1011 aa).

Residues 1 to 22 form a disordered region; it reads MSQASVDMEDVKPSISLPSDDG. The domain A stretch occupies residues 411 to 612; that stretch reads TPVSTAMTTA…ERGSSMYNSL (202 aa). Residues 411 to 860 are pocket; that stretch reads TPVSTAMTTA…NEVFIPSVKP (450 aa). The tract at residues 613–729 is spacer; the sequence is IVARPTLAAE…PAGGGETCAE (117 aa). Residues 730–860 form a domain B region; it reads TGINIFFNKI…NEVFIPSVKP (131 aa). Residues 872-903 are disordered; that stretch reads QKSKSSPEDSNNADSQIPGSPRLSPFPNLPDM. Polar residues predominate over residues 873–889; it reads KSKSSPEDSNNADSQIP.

This sequence belongs to the retinoblastoma protein (RB) family.

The protein localises to the nucleus. Its function is as follows. Regulator of biological processes that recruits a histone deacetylase to control gene transcription. May play a role in the entry into mitosis, negatively regulating the cell proliferation. Formation of stable complexes with geminiviridae replication-associated proteins may create a cellular environment which favors viral DNA replication. In Cocos nucifera (Coconut palm), this protein is Retinoblastoma-related protein (Rb1).